Consider the following 300-residue polypeptide: 4-hydroxy-tetrahydrodipicolinate synthase (300 aa).

Threonine 46 lines the pyruvate pocket. The active-site Proton donor/acceptor is tyrosine 134. Residue lysine 162 is the Schiff-base intermediate with substrate of the active site. Valine 204 contributes to the pyruvate binding site.

Belongs to the DapA family. As to quaternary structure, homotetramer; dimer of dimers.

The protein resides in the cytoplasm. It carries out the reaction L-aspartate 4-semialdehyde + pyruvate = (2S,4S)-4-hydroxy-2,3,4,5-tetrahydrodipicolinate + H2O + H(+). It functions in the pathway amino-acid biosynthesis; L-lysine biosynthesis via DAP pathway; (S)-tetrahydrodipicolinate from L-aspartate: step 3/4. Catalyzes the condensation of (S)-aspartate-beta-semialdehyde [(S)-ASA] and pyruvate to 4-hydroxy-tetrahydrodipicolinate (HTPA). In Heliobacterium modesticaldum (strain ATCC 51547 / Ice1), this protein is 4-hydroxy-tetrahydrodipicolinate synthase.